Here is a 509-residue protein sequence, read N- to C-terminus: NADH dehydrogenase (509 aa).

The segment at Met1 to Gly183 is membrane-binding. The catalytic stretch occupies residues Arg184–Asn509. Asp210–Phe241 lines the FAD pocket. A disulfide bond links Cys337 and Cys340. Asp349–Ala379 is an NAD(+) binding site. Thr469–Asp479 serves as a coordination point for FAD.

Belongs to the class-II pyridine nucleotide-disulfide oxidoreductase family. Homodimer. Requires FAD as cofactor.

The protein localises to the cell membrane. The catalysed reaction is a ubiquinone + NADH + 5 H(+)(in) = a ubiquinol + NAD(+) + 4 H(+)(out). Transfer of electrons from NADH to the respiratory chain. The immediate electron acceptor for the enzyme is believed to be ubiquinone. This chain is NADH dehydrogenase (ahpF), found in Bacillus subtilis (strain 168).